The chain runs to 1188 residues: Spermatogenesis-associated protein 31C1 (1188 aa).

The helical transmembrane segment at 23–43 (PWVLDIFLTLVFALGLFFLLL) threads the bilayer. Disordered stretches follow at residues 57–92 (PSPR…KNHS), 121–249 (LEKG…LLTP), 483–510 (PGTS…EAQT), 530–567 (TPQN…DSGS), 733–813 (MPER…PTVP), 934–1013 (NMGH…PSIS), 1121–1143 (QQAT…QQPL), and 1155–1188 (LRHP…HHHH). 2 stretches are compositionally biased toward basic residues: residues 59-68 (PRKRKRHLVS) and 80-92 (RRGR…KNHS). Residues 138–154 (VGKRTPDGASRSSHEPM) show a composition bias toward basic and acidic residues. Residues 191 to 207 (SSLSASQPPEPSLLLER) are compositionally biased toward low complexity. Residues 210-241 (PEPPALFPHPPHTPDPLACSPPPPKGFTPPPL) show a composition bias toward pro residues. A compositionally biased stretch (polar residues) spans 495–510 (WQSSTSTGESSKEAQT). 2 stretches are compositionally biased toward polar residues: residues 783–800 (LKGS…SSRA) and 943–954 (PNCQGSCKSQSP). Residues 960-976 (HKRENSRKPNLEKHEEM) are compositionally biased toward basic and acidic residues. Over residues 1121–1130 (QQATLKNQSR) the composition is skewed to polar residues.

This sequence belongs to the SPATA31 family.

The protein resides in the membrane. Functionally, may play a role in spermatogenesis. The polypeptide is Spermatogenesis-associated protein 31C1 (SPATA31C1) (Homo sapiens (Human)).